Consider the following 361-residue polypeptide: Putative agmatine deiminase (361 aa).

C354 functions as the Amidino-cysteine intermediate in the catalytic mechanism.

Belongs to the agmatine deiminase family.

The enzyme catalyses agmatine + H2O = N-carbamoylputrescine + NH4(+). In Streptococcus pneumoniae (strain ATCC BAA-255 / R6), this protein is Putative agmatine deiminase.